Here is a 583-residue protein sequence, read N- to C-terminus: Aspartyl protease APCB1 (583 aa).

Residues 83–103 traverse the membrane as a helical segment; it reads LVLGLLGISLLAVAFYASVFP. Residues 203-564 enclose the Peptidase A1 domain; sequence YYTRILVGKP…DNVKRRIGWM (362 aa). Residues Asp223 and Asp431 contribute to the active site.

Belongs to the peptidase A1 family. In terms of assembly, interacts with BAG6 and BAGP1.

The protein resides in the membrane. Its function is as follows. Involved in proteolytic processing of BAG6 and plant basal immunity. The polypeptide is Aspartyl protease APCB1 (Arabidopsis thaliana (Mouse-ear cress)).